The chain runs to 357 residues: MPQTLHVHSRVKDYDILFTDHVLKTLADCLGERKQRKLLFITDQTVYHLYQTLFEEFAQQYNAFVHVYPSGGQSKSLERVSAIYDQLIAENFSKKDMIVTIGGGVVGDLGGFVAATYYRGIPYIQIPTTLLSQVDSSIGGKVGVHFKGLTNMIGSIYPPEAIIISTTFLETLPQREFSCGISEMLKIGFIHDRPLFQQLRDFQKETDKQGLERLIYQSISNKKRIVEQDEFENGLRMSLNFGHTLGHAIESLCHHDFYHHGEAIAIGMVVDAKLAVSKGLLPKEDLDSLLQVFERYQLPTTLERADVSATSLFDVFKTDKKNSEQHIIFILPTETGFTTLAINKDDHQFVEKLDSLL.

NAD(+) is bound by residues 104 to 108 (GVVGD), 128 to 129 (TT), lysine 141, and 168 to 171 (FLET). Residues glutamate 183, histidine 243, and histidine 260 each coordinate Zn(2+).

This sequence belongs to the sugar phosphate cyclases superfamily. Dehydroquinate synthase family. NAD(+) serves as cofactor. The cofactor is Co(2+). Requires Zn(2+) as cofactor.

The protein localises to the cytoplasm. It catalyses the reaction 7-phospho-2-dehydro-3-deoxy-D-arabino-heptonate = 3-dehydroquinate + phosphate. It functions in the pathway metabolic intermediate biosynthesis; chorismate biosynthesis; chorismate from D-erythrose 4-phosphate and phosphoenolpyruvate: step 2/7. Catalyzes the conversion of 3-deoxy-D-arabino-heptulosonate 7-phosphate (DAHP) to dehydroquinate (DHQ). In Streptococcus pyogenes serotype M3 (strain ATCC BAA-595 / MGAS315), this protein is 3-dehydroquinate synthase.